The primary structure comprises 86 residues: UPF0335 protein BruAb1_1737 (86 aa).

Belongs to the UPF0335 family.

In Brucella abortus biovar 1 (strain 9-941), this protein is UPF0335 protein BruAb1_1737.